A 557-amino-acid chain; its full sequence is Formate--tetrahydrofolate ligase (557 aa).

ATP is bound at residue 65 to 72; the sequence is TPAGEGKT.

This sequence belongs to the formate--tetrahydrofolate ligase family.

The catalysed reaction is (6S)-5,6,7,8-tetrahydrofolate + formate + ATP = (6R)-10-formyltetrahydrofolate + ADP + phosphate. Its pathway is one-carbon metabolism; tetrahydrofolate interconversion. This Methylorubrum extorquens (strain CM4 / NCIMB 13688) (Methylobacterium extorquens) protein is Formate--tetrahydrofolate ligase.